An 85-amino-acid polypeptide reads, in one-letter code: Probable Thioredoxin (85 aa).

Positions 2–85 (VVKIEVFTSP…LFEAISDEIE (84 aa)) constitute a Glutaredoxin domain. The cysteines at positions 13 and 16 are disulfide-linked.

The protein belongs to the glutaredoxin family.

It is found in the cytoplasm. In terms of biological role, does not function as a glutathione-disulfide oxidoreductase in the presence of glutathione and glutathione reductase. May be a component of a ribonucleotide-reducing system distinct from the previously described systems utilizing thioredoxin or glutaredoxin. In Methanothermobacter marburgensis (strain ATCC BAA-927 / DSM 2133 / JCM 14651 / NBRC 100331 / OCM 82 / Marburg) (Methanobacterium thermoautotrophicum), this protein is Probable Thioredoxin.